Reading from the N-terminus, the 247-residue chain is 3-deoxy-manno-octulosonate cytidylyltransferase (247 aa).

This sequence belongs to the KdsB family.

Its subcellular location is the cytoplasm. It catalyses the reaction 3-deoxy-alpha-D-manno-oct-2-ulosonate + CTP = CMP-3-deoxy-beta-D-manno-octulosonate + diphosphate. The protein operates within nucleotide-sugar biosynthesis; CMP-3-deoxy-D-manno-octulosonate biosynthesis; CMP-3-deoxy-D-manno-octulosonate from 3-deoxy-D-manno-octulosonate and CTP: step 1/1. It functions in the pathway bacterial outer membrane biogenesis; lipopolysaccharide biosynthesis. Activates KDO (a required 8-carbon sugar) for incorporation into bacterial lipopolysaccharide in Gram-negative bacteria. The polypeptide is 3-deoxy-manno-octulosonate cytidylyltransferase (Chlorobium limicola (strain DSM 245 / NBRC 103803 / 6330)).